A 629-amino-acid polypeptide reads, in one-letter code: Hemocyanin F chain (629 aa).

H172, H176, H203, H324, H328, and H364 together coordinate Cu cation. N-linked (GlcNAc...) asparagine glycosylation is found at N395 and N447. A compositionally biased stretch (polar residues) spans 503–513 (SESSVTVSHTP). A disordered region spans residues 503-522 (SESSVTVSHTPTFEELQRGE). N527 carries an N-linked (GlcNAc...) asparagine glycan. Residues C534 and C582 are joined by a disulfide bond. N615 carries an N-linked (GlcNAc...) asparagine glycan.

Belongs to the tyrosinase family. Hemocyanin subfamily. In terms of assembly, tarantula hemocyanin is a 24-chain polymer with seven different chains identified. Hemolymph.

It is found in the secreted. Its subcellular location is the extracellular space. In terms of biological role, hemocyanins are copper-containing oxygen carriers occurring freely dissolved in the hemolymph of many mollusks and arthropods. This is Hemocyanin F chain (HCF) from Aphonopelma sp. (American tarantula).